The sequence spans 579 residues: Thiol:disulfide interchange protein DsbD (579 aa).

The first 16 residues, 1–16 (MKKLFLFFTLIFTAFA), serve as a signal peptide directing secretion. 2 disulfide bridges follow: Cys-124–Cys-129 and Cys-193–Cys-315. 8 consecutive transmembrane segments (helical) span residues 178-198 (IFGF…LPML), 230-250 (LTYT…QIAL), 254-274 (YVMI…FGLF), 296-316 (GAFG…SPCT), 337-357 (AVTL…ITLF), 376-396 (FGFV…PEVW), 397-417 (ESRL…LQMS), and 420-440 (GFGY…VQPL). The 131-residue stretch at 449–579 (TTTQSAVENM…AFSNWIEKLL (131 aa)) folds into the Thioredoxin domain. An intrachain disulfide couples Cys-495 to Cys-498.

This sequence belongs to the thioredoxin family. DsbD subfamily.

The protein localises to the cell inner membrane. The enzyme catalyses [protein]-dithiol + NAD(+) = [protein]-disulfide + NADH + H(+). It catalyses the reaction [protein]-dithiol + NADP(+) = [protein]-disulfide + NADPH + H(+). Its function is as follows. Required to facilitate the formation of correct disulfide bonds in some periplasmic proteins and for the assembly of the periplasmic c-type cytochromes. Acts by transferring electrons from cytoplasmic thioredoxin to the periplasm. This transfer involves a cascade of disulfide bond formation and reduction steps. This Haemophilus influenzae (strain PittGG) protein is Thiol:disulfide interchange protein DsbD.